A 212-amino-acid chain; its full sequence is dITP/XTP pyrophosphatase (212 aa).

Serine 7 to lysine 12 serves as a coordination point for substrate. The Proton acceptor role is filled by aspartate 72. Aspartate 72 is a binding site for Mg(2+). Substrate contacts are provided by residues serine 73, phenylalanine 163 to aspartate 166, lysine 187, and histidine 192 to arginine 193. Residues glycine 164–glycine 194 form a disordered region. Over residues threonine 183–histidine 192 the composition is skewed to basic and acidic residues.

This sequence belongs to the HAM1 NTPase family. Homodimer. The cofactor is Mg(2+).

It catalyses the reaction XTP + H2O = XMP + diphosphate + H(+). It carries out the reaction dITP + H2O = dIMP + diphosphate + H(+). The catalysed reaction is ITP + H2O = IMP + diphosphate + H(+). Functionally, pyrophosphatase that catalyzes the hydrolysis of nucleoside triphosphates to their monophosphate derivatives, with a high preference for the non-canonical purine nucleotides XTP (xanthosine triphosphate), dITP (deoxyinosine triphosphate) and ITP. Seems to function as a house-cleaning enzyme that removes non-canonical purine nucleotides from the nucleotide pool, thus preventing their incorporation into DNA/RNA and avoiding chromosomal lesions. The polypeptide is dITP/XTP pyrophosphatase (Corynebacterium urealyticum (strain ATCC 43042 / DSM 7109)).